The following is a 110-amino-acid chain: NADH-quinone oxidoreductase subunit K (110 aa).

The next 3 membrane-spanning stretches (helical) occupy residues 14–34 (VSQYFILSFILLGIGLFGMMV), 39–59 (ITILMSLELALNSVNIAFVGI), and 70–90 (IFALFTIALAAAEAAVGLGII).

The protein belongs to the complex I subunit 4L family. NDH-1 is composed of 14 different subunits. Subunits NuoA, H, J, K, L, M, N constitute the membrane sector of the complex.

Its subcellular location is the cell inner membrane. It catalyses the reaction a quinone + NADH + 5 H(+)(in) = a quinol + NAD(+) + 4 H(+)(out). In terms of biological role, NDH-1 shuttles electrons from NADH, via FMN and iron-sulfur (Fe-S) centers, to quinones in the respiratory chain. The immediate electron acceptor for the enzyme in this species is believed to be ubiquinone. Couples the redox reaction to proton translocation (for every two electrons transferred, four hydrogen ions are translocated across the cytoplasmic membrane), and thus conserves the redox energy in a proton gradient. This Hydrogenobaculum sp. (strain Y04AAS1) protein is NADH-quinone oxidoreductase subunit K.